A 560-amino-acid chain; its full sequence is IQ motif and ankyrin repeat domain-containing protein 1 (560 aa).

The disordered stretch occupies residues 1–72 (MDSKKGRPKA…DRAARAIQGA (72 aa)). Residues 62–91 (EDRAARAIQGAFRQLRARRELARRREERRE) form the IQ domain. ANK repeat units lie at residues 191–223 (YGNT…SKGA) and 224–253 (FGPT…DPRV). Positions 281–398 (LTEAMLQNME…RLELREQTQE (118 aa)) form a coiled coil.

The chain is IQ motif and ankyrin repeat domain-containing protein 1 from Homo sapiens (Human).